A 122-amino-acid chain; its full sequence is Serum amyloid A-3 protein (122 aa).

The N-terminal stretch at 1–18 (MKLSIGIIFCFLILGVNS) is a signal peptide. Positions 88–122 (GRGAEDSKADQEANQWGRSGNDPNHFRPKGLPDKY) are disordered. The segment covering 99–109 (EANQWGRSGND) has biased composition (polar residues).

It belongs to the SAA family. In terms of tissue distribution, expressed by the liver; secreted in plasma. Expressed in synovial fibroblasts.

It localises to the secreted. Its function is as follows. Major acute phase reactant. Apolipoprotein of the HDL complex. In vitro exhibits antimicrobial activity against Escherichia coli, Streptococcus uberis and Pseudomonas aeruginosa. The protein is Serum amyloid A-3 protein (SAA3) of Oryctolagus cuniculus (Rabbit).